A 482-amino-acid chain; its full sequence is tRNA sulfurtransferase (482 aa).

One can recognise a THUMP domain in the interval 61 to 165 (PAIRDALTRI…NDRLLLVKGR (105 aa)). Residues 183–184 (LI), lysine 265, glycine 287, and glutamine 296 contribute to the ATP site. A disulfide bridge connects residues cysteine 344 and cysteine 456. The region spanning 404–482 (FGANDAILDI…GFSNVKVYRP (79 aa)) is the Rhodanese domain. Cysteine 456 acts as the Cysteine persulfide intermediate in catalysis.

Belongs to the ThiI family.

The protein localises to the cytoplasm. The enzyme catalyses [ThiI sulfur-carrier protein]-S-sulfanyl-L-cysteine + a uridine in tRNA + 2 reduced [2Fe-2S]-[ferredoxin] + ATP + H(+) = [ThiI sulfur-carrier protein]-L-cysteine + a 4-thiouridine in tRNA + 2 oxidized [2Fe-2S]-[ferredoxin] + AMP + diphosphate. It catalyses the reaction [ThiS sulfur-carrier protein]-C-terminal Gly-Gly-AMP + S-sulfanyl-L-cysteinyl-[cysteine desulfurase] + AH2 = [ThiS sulfur-carrier protein]-C-terminal-Gly-aminoethanethioate + L-cysteinyl-[cysteine desulfurase] + A + AMP + 2 H(+). The protein operates within cofactor biosynthesis; thiamine diphosphate biosynthesis. Its function is as follows. Catalyzes the ATP-dependent transfer of a sulfur to tRNA to produce 4-thiouridine in position 8 of tRNAs, which functions as a near-UV photosensor. Also catalyzes the transfer of sulfur to the sulfur carrier protein ThiS, forming ThiS-thiocarboxylate. This is a step in the synthesis of thiazole, in the thiamine biosynthesis pathway. The sulfur is donated as persulfide by IscS. The protein is tRNA sulfurtransferase of Klebsiella pneumoniae (strain 342).